We begin with the raw amino-acid sequence, 422 residues long: Trichothecene biosynthesis transcription regulator TRI10 (422 aa).

The protein belongs to the TRI10 transcription regulator family.

It is found in the nucleus. Transcriptional activator of all of the trichothecene biosynthesis genes. Acts upstream of the cluster-encoded transcription factor TRI6 and is necessary for full expression of both the other trichothecene genes and the genes for the primary metabolic pathway that precedes the trichothecene biosynthetic pathway. In Trichoderma arundinaceum, this protein is Trichothecene biosynthesis transcription regulator TRI10.